A 122-amino-acid polypeptide reads, in one-letter code: Histone H2B subacrosomal variant (122 aa).

The span at 1-25 shows a compositional bias: basic residues; it reads MARNVTKRNKRCRGHQKAIYKKKSH. The segment at 1–30 is disordered; it reads MARNVTKRNKRCRGHQKAIYKKKSHSSSES.

This sequence belongs to the histone H2B family. In terms of tissue distribution, testis-specific. Restricted to the spermatid population of seminiferous epithelium. Not present in Sertoli cells, spermatogonia, spermatocytes or cells of the interstitial tissue (at protein level).

The protein localises to the cytoplasm. In terms of biological role, may act as an acrosome-nuclear docking protein in sperm. In Bos taurus (Bovine), this protein is Histone H2B subacrosomal variant (SUBH2BV).